The following is a 241-amino-acid chain: Homeobox protein TGIF2LX (241 aa).

Disordered stretches follow at residues 1-58 and 126-210; these read MEAA…GNLP and TGKD…SPEE. The segment covering 21 to 39 has biased composition (polar residues); that stretch reads AKTQSPAQDTSIMSRNNAD. Positions 48–111 form a DNA-binding region, homeobox; TALE-type; sequence EHKKKRKGNL…INARRRILPD (64 aa). Over residues 195 to 206 the composition is skewed to low complexity; the sequence is VSVTSPSSPELV.

It belongs to the TALE/TGIF homeobox family. As to expression, specifically expressed in adult testis.

It is found in the nucleus. In terms of biological role, may have a transcription role in testis. This is Homeobox protein TGIF2LX (TGIF2LX) from Homo sapiens (Human).